A 987-amino-acid chain; its full sequence is MMWGMPNIKLKFIYLCILLFVFMASMLNSVSGLKTIFYDDFENWSGWYNYSSGAVEQSSNYAHSGIYSLRKFLNDDPNGGYKLIGKEIGRDIVMEGWIYRPLPYVSGRWDRIGIEDENFNGYSIRIEHDYNKIAIETRENGIAVNTLVITNWNPPENQWYYFKFYIYSNGTLRLEVYYENGSLGATVSAIDNIYTKFDRVVVHGGQDYYVDDLRISDLYPPLRVRYIEEYNATATVDGTGKTNYSYGLTGHIIIENTAPYKEDTLNDVWVAVDIKNNASGLRLVYNGTPKGVFIESSAPAYTNLPNANTYIHIPILPNNSYVEYEFDIDASQTLPILVNETYDVTKIPANKMSEWTVNLIVYLNKNLVPNGENVNVNVIKYLSNGQFYDNFENWTGWNQYKNGIVQWSSIQSHSGNYSLEKYGISTSLNNDPNGGYKLLPKEIGRDVVISGWVYRPSNWGGGPIDRIGLEDENFDGYSFEVNHYSNYISIDRRTNGNPTEISPEVYWNPPEDEWYYFELKIYSNGTITFSTYYQNGSLAATVSTIDNTYTKFDRVVIHGGYVYYVDDLEVNSKNFDFYGDKNWKYLEITSANSSEGTAVLFDGDYFKKDYNTSNLNAINWTNITLNWSNDSATLVFNVLGNYSYSERDNILAKYGFAKILFNYNGTNTNTSIKGVYASGSYSISTDHGTTGEINIWIENVTFKNDAKSYSFNLTNLNIWAVNKSAYELYWNPFNKSIWIDGSNYTITPNIDIPPGEVWNSKTYNFTFSGVPIVWANCSFTLSKKDYILLNEVSQIGSSYVVVEEIYVVGSYLIKVTKHIVPDADGTYDIYIVVENIGSVKTPEYVYVYDLIPKNFTVSDEWVNQSSMLIAEGNHTITTNPRYNLSMWWALHAIYPGADGDGNWNDTAEILANKTVVIHYKLNGTGEFYPSDAFIVGIDPTNSLLPTTSPKITTVAGTVENNFEIFLILINVIFGLGILTKRNIRNNK.

The next 2 membrane-spanning stretches (helical) occupy residues 12-32 (FIYLCILLFVFMASMLNSVSG) and 958-978 (VENNFEIFLILINVIFGLGIL).

It to M.jannaschii MJ1393 and A.fulgidus AF2028.

Its subcellular location is the cell membrane. This is an uncharacterized protein from Methanocaldococcus jannaschii (strain ATCC 43067 / DSM 2661 / JAL-1 / JCM 10045 / NBRC 100440) (Methanococcus jannaschii).